The sequence spans 140 residues: Large ribosomal subunit protein uL15 (140 aa).

A disordered region spans residues 1–31 (MDTKKFRGSRTCGGGTHKNRRGAGNRGGRGK).

The protein belongs to the universal ribosomal protein uL15 family. As to quaternary structure, part of the 50S ribosomal subunit.

Binds to the 23S rRNA. The polypeptide is Large ribosomal subunit protein uL15 (Methanosarcina barkeri (strain Fusaro / DSM 804)).